The sequence spans 235 residues: Small ribosomal subunit protein uS2c (235 aa).

The protein belongs to the universal ribosomal protein uS2 family.

Its subcellular location is the plastid. This is Small ribosomal subunit protein uS2c (rps2) from Euglena longa (Euglenophycean alga).